Consider the following 167-residue polypeptide: CS6 fimbrial subunit B (167 aa).

The signal sequence occupies residues 1–21 (MLKKIIPAIVLIAGTSGVVNA).

It is found in the fimbrium. The sequence is that of CS6 fimbrial subunit B (cssB) from Escherichia coli.